We begin with the raw amino-acid sequence, 430 residues long: Glutamyl-tRNA reductase (430 aa).

Residues 50–53 (TCNR), Ser-108, 113–115 (EPQ), and Gln-119 each bind substrate. The active-site Nucleophile is the Cys-51. 188 to 193 (GAGEMA) contacts NADP(+).

This sequence belongs to the glutamyl-tRNA reductase family. As to quaternary structure, homodimer.

The catalysed reaction is (S)-4-amino-5-oxopentanoate + tRNA(Glu) + NADP(+) = L-glutamyl-tRNA(Glu) + NADPH + H(+). The protein operates within porphyrin-containing compound metabolism; protoporphyrin-IX biosynthesis; 5-aminolevulinate from L-glutamyl-tRNA(Glu): step 1/2. In terms of biological role, catalyzes the NADPH-dependent reduction of glutamyl-tRNA(Glu) to glutamate 1-semialdehyde (GSA). The polypeptide is Glutamyl-tRNA reductase (Lawsonia intracellularis (strain PHE/MN1-00)).